Consider the following 248-residue polypeptide: 3-deoxy-manno-octulosonate cytidylyltransferase (248 aa).

This sequence belongs to the KdsB family.

The protein localises to the cytoplasm. It catalyses the reaction 3-deoxy-alpha-D-manno-oct-2-ulosonate + CTP = CMP-3-deoxy-beta-D-manno-octulosonate + diphosphate. The protein operates within nucleotide-sugar biosynthesis; CMP-3-deoxy-D-manno-octulosonate biosynthesis; CMP-3-deoxy-D-manno-octulosonate from 3-deoxy-D-manno-octulosonate and CTP: step 1/1. It participates in bacterial outer membrane biogenesis; lipopolysaccharide biosynthesis. Activates KDO (a required 8-carbon sugar) for incorporation into bacterial lipopolysaccharide in Gram-negative bacteria. This Shigella dysenteriae serotype 1 (strain Sd197) protein is 3-deoxy-manno-octulosonate cytidylyltransferase.